The sequence spans 859 residues: Protein argonaute-2 (859 aa).

The segment at 1-27 is disordered; it reads MYSGAGPALAPPAPPPPIQGYAFKPPP. Tyrosine 2 is subject to 3'-nitrotyrosine. A compositionally biased stretch (pro residues) spans 9 to 27; the sequence is LAPPAPPPPIQGYAFKPPP. Positions 229 to 348 constitute a PAZ domain; sequence PVIEFVCEVL…LPLEVCNIVA (120 aa). The tract at residues 311 to 316 is interaction with guide RNA; it reads YFKDRH. The residue at position 387 (serine 387) is a Phosphoserine. In terms of domain architecture, Piwi spans 517-818; it reads LVVVILPGKT…VAFRARYHLV (302 aa). Residues 524 to 566 are interaction with guide RNA; sequence GKTPVYAEVKRVGDTVLGMATQCVQMKNVQRTTPQTLSNLCLK. An interaction with GW182 family members region spans residues 587-590; that stretch reads FQQP. Aspartate 597 contributes to the a divalent metal cation binding site. Residues 650–660 form an interaction with GW182 family members region; it reads LIQFYKSTRFK. Residue aspartate 669 participates in a divalent metal cation binding. Proline 700 is subject to 4-hydroxyproline. Interaction with guide RNA stretches follow at residues 709–710, 753–761, and 790–812; these read KR, HAGIQGTSR, and YVRC…VAFR. Histidine 807 lines the a divalent metal cation pocket. Residues serine 824, serine 828, serine 831, and serine 834 each carry the phosphoserine modification.

The protein belongs to the argonaute family. Ago subfamily. In terms of assembly, interacts with DICER1 through its Piwi domain and with TARBP2 during assembly of the RNA-induced silencing complex (RISC). Together, DICER1, AGO2 and TARBP2 constitute the trimeric RISC loading complex (RLC), or micro-RNA (miRNA) loading complex (miRLC). Within the RLC/miRLC, DICER1 and TARBP2 are required to process precursor miRNAs (pre-miRNAs) to mature miRNAs and then load them onto AGO2. AGO2 bound to the mature miRNA constitutes the minimal RISC and may subsequently dissociate from DICER1 and TARBP2. Note however that the term RISC has also been used to describe the trimeric RLC/miRLC. The formation of RISC complexes containing siRNAs rather than miRNAs appears to occur independently of DICER1. Interacts with AGO1. Also interacts with DDB1, DDX5, DDX6, DDX20, DHX30, DHX36, DDX47, DHX9, ELAVL, FXR1, GEMIN4, HNRNPF, IGF2BP1, ILF3, IMP8, MATR3, PABPC1, PRMT5, P4HA1, P4HB, RBM4, SART3, TNRC6A, TNRC6B, UPF1 and YBX1. Interacts with the P-body components DCP1A and XRN1. Associates with polysomes and messenger ribonucleoproteins (mNRPs). Interacts with RBM4; the interaction is modulated under stress-induced conditions, occurs under both cell proliferation and differentiation conditions and in an RNA- and phosphorylation-independent manner. Interacts with LIMD1, WTIP and AJUBA. Interacts with TRIM71; the interaction increases in presence of RNA. Interacts with APOBEC3G in an RNA-dependent manner. Interacts with APOBEC3A, APOBEC3C, APOBEC3F and APOBEC3H. Interacts with DICER1, TARBP2, EIF6, MOV10 and RPL7A (60S ribosome subunit); they form a large RNA-induced silencing complex (RISC). Interacts with FMR1. Interacts with ZFP36. Found in a complex, composed of AGO2, CHD7 and ARB2A. Interacts with RC3H1; the interaction is RNA independent. Interacts with SND1. Interacts with SYT11. Interacts with CLNK. Interacts with GARRE1. Interacts with GRB2; this interaction is important for the formation of a ternary complex containing GRB2, AGO2 and DICER1. As to quaternary structure, (Microbial infection) Interacts with Epstein-Barr virus (EBV) tegument protein BGLF2; this interaction participates in the regulation of cellular miRNA by the virus, leading to enhanced SUMOylation. (Microbial infection) Interacts with rotavirus A non-structural protein 5; this interaction probably plays a role in the sequestration of AGO2 in viral factories. In terms of assembly, (Microbial infection) Interacts with human herpesvirus 8 protein MTA/ORF57; this interaction inhibits P-body formation. Requires Mg(2+) as cofactor. It depends on Mn(2+) as a cofactor. In terms of processing, hydroxylated. 4-hydroxylation appears to enhance protein stability but is not required for miRNA-binding or endonuclease activity. Post-translationally, ubiquitinated on surface-exposed lysines by a SCF-like E3 ubiquitin-protein ligase complex containing ZSWIM8 during target-directed microRNA degradation (TDMD), a process that mediates degradation of microRNAs (miRNAs). Ubiquitination by the SCF-like E3 ubiquitin-protein ligase complex containing ZSWIM8 leads to its subsequent degradation, thereby exposing miRNAs for degradation. ZSWIM8 recognizes and binds AGO2 when it is engaged with a TDMD target. Phosphorylated. A phosphorylation cycle of C-terminal serine cluster (Ser-824-Ser-834) regulates the release of target mRNAs. Target-binding leads to phosphorylation of these residues by CSNK1A1, which reduces the affinity of AGO2 for mRNA and enables target release. The ANKRD52-PPP6C phosphatase complex dephosphorylates the residues, which primes AGO2 for binding a new target. In terms of processing, phosphorylation at Ser-387 by AKT3; leads to up-regulate translational repression of microRNA target and down-regulate endonucleolytic cleavage.

It localises to the cytoplasm. It is found in the P-body. The protein resides in the nucleus. It carries out the reaction Endonucleolytic cleavage to 5'-phosphomonoester.. Inhibited by EDTA. Its function is as follows. Required for RNA-mediated gene silencing (RNAi) by the RNA-induced silencing complex (RISC). The 'minimal RISC' appears to include AGO2 bound to a short guide RNA such as a microRNA (miRNA) or short interfering RNA (siRNA). These guide RNAs direct RISC to complementary mRNAs that are targets for RISC-mediated gene silencing. The precise mechanism of gene silencing depends on the degree of complementarity between the miRNA or siRNA and its target. Binding of RISC to a perfectly complementary mRNA generally results in silencing due to endonucleolytic cleavage of the mRNA specifically by AGO2. Binding of RISC to a partially complementary mRNA results in silencing through inhibition of translation, and this is independent of endonuclease activity. May inhibit translation initiation by binding to the 7-methylguanosine cap, thereby preventing the recruitment of the translation initiation factor eIF4-E. May also inhibit translation initiation via interaction with EIF6, which itself binds to the 60S ribosomal subunit and prevents its association with the 40S ribosomal subunit. The inhibition of translational initiation leads to the accumulation of the affected mRNA in cytoplasmic processing bodies (P-bodies), where mRNA degradation may subsequently occur. In some cases RISC-mediated translational repression is also observed for miRNAs that perfectly match the 3' untranslated region (3'-UTR). Can also up-regulate the translation of specific mRNAs under certain growth conditions. Binds to the AU element of the 3'-UTR of the TNF (TNF-alpha) mRNA and up-regulates translation under conditions of serum starvation. Also required for transcriptional gene silencing (TGS), in which short RNAs known as antigene RNAs or agRNAs direct the transcriptional repression of complementary promoter regions. Functionally, (Microbial infection) Upon Sars-CoV-2 infection, associates with viral miRNA-like small RNA, CoV2-miR-O7a, and may repress mRNAs, such as BATF2, to evade the IFN response. The protein is Protein argonaute-2 of Homo sapiens (Human).